Here is a 182-residue protein sequence, read N- to C-terminus: CASP-like protein 5B1 (182 aa).

The interval 1–20 is disordered; that stretch reads GDASHAVDHPIGGHPEHEHD. At 1–41 the chain is on the cytoplasmic side; the sequence is GDASHAVDHPIGGHPEHEHDLREEEGPLIFPMKDLPGTPGT. The chain crosses the membrane as a helical span at residues 42–62; that stretch reads VGGLALRMGQFIFAAASVVIM. Over 63 to 73 the chain is Extracellular; that stretch reads VTSDEFINFTA. Asn70 carries N-linked (GlcNAc...) asparagine glycosylation. Residues 74–94 traverse the membrane as a helical segment; the sequence is FCYLAAAMALQFLWSFVLATI. Residues 95 to 108 lie on the Cytoplasmic side of the membrane; sequence DVYALLIKRGLPNS. A helical transmembrane segment spans residues 109-129; it reads ILLSLFVVGDWVTATLSLAAA. The Extracellular segment spans residues 130–159; it reads CSTAGITVLFDKDLNYCDQMHCRRYQLSAT. The helical transmembrane segment at 160-180 threads the bilayer; it reads MAFFSWVLIAISSLITLLLLV. Topologically, residues 181-182 are cytoplasmic; the sequence is SE.

This sequence belongs to the Casparian strip membrane proteins (CASP) family. As to quaternary structure, homodimer and heterodimers.

Its subcellular location is the cell membrane. This chain is CASP-like protein 5B1, found in Picea sitchensis (Sitka spruce).